Here is a 223-residue protein sequence, read N- to C-terminus: N-terminal Xaa-Pro-Lys N-methyltransferase 1 (223 aa).

S-adenosyl-L-methionine-binding positions include glycine 69, arginine 74, 91–93, 119–120, and glutamine 135; these read DVT and LQ.

Belongs to the methyltransferase superfamily. NTM1 family.

The protein resides in the nucleus. The catalysed reaction is N-terminal L-alanyl-L-prolyl-L-lysyl-[protein] + 3 S-adenosyl-L-methionine = N-terminal N,N,N-trimethyl-L-alanyl-L-prolyl-L-lysyl-[protein] + 3 S-adenosyl-L-homocysteine + 3 H(+). It catalyses the reaction N-terminal L-seryl-L-prolyl-L-lysyl-[protein] + 3 S-adenosyl-L-methionine = N-terminal N,N,N-trimethyl-L-seryl-L-prolyl-L-lysyl-[protein] + 3 S-adenosyl-L-homocysteine + 3 H(+). It carries out the reaction N-terminal L-prolyl-L-prolyl-L-lysyl-[protein] + 2 S-adenosyl-L-methionine = N-terminal N,N-dimethyl-L-prolyl-L-prolyl-L-lysyl-[protein] + 2 S-adenosyl-L-homocysteine + 2 H(+). In terms of biological role, distributive alpha-N-methyltransferase that methylates the N-terminus of target proteins containing the N-terminal motif [Ala/Gly/Pro/Ser]-Pro-Lys when the initiator Met is cleaved. Specifically catalyzes mono-, di- or tri-methylation of the exposed alpha-amino group of the Ala, Gly or Ser residue in the [Ala/Gly/Ser]-Pro-Lys motif and mono- or di-methylation of Pro in the Pro-Pro-Lys motif. Required during mitosis for normal bipolar spindle formation and chromosome segregation via its action on target proteins. The polypeptide is N-terminal Xaa-Pro-Lys N-methyltransferase 1 (ntmt1) (Danio rerio (Zebrafish)).